An 875-amino-acid chain; its full sequence is Alanine--tRNA ligase (875 aa).

Zn(2+)-binding residues include His563, His567, Cys665, and His669.

This sequence belongs to the class-II aminoacyl-tRNA synthetase family. It depends on Zn(2+) as a cofactor.

It is found in the cytoplasm. It carries out the reaction tRNA(Ala) + L-alanine + ATP = L-alanyl-tRNA(Ala) + AMP + diphosphate. In terms of biological role, catalyzes the attachment of alanine to tRNA(Ala) in a two-step reaction: alanine is first activated by ATP to form Ala-AMP and then transferred to the acceptor end of tRNA(Ala). Also edits incorrectly charged Ser-tRNA(Ala) and Gly-tRNA(Ala) via its editing domain. The protein is Alanine--tRNA ligase of Desulfitobacterium hafniense (strain Y51).